Here is a 101-residue protein sequence, read N- to C-terminus: Small ribosomal subunit protein uS14 (101 aa).

This sequence belongs to the universal ribosomal protein uS14 family. As to quaternary structure, part of the 30S ribosomal subunit. Contacts proteins S3 and S10.

Binds 16S rRNA, required for the assembly of 30S particles and may also be responsible for determining the conformation of the 16S rRNA at the A site. The polypeptide is Small ribosomal subunit protein uS14 (Bordetella parapertussis (strain 12822 / ATCC BAA-587 / NCTC 13253)).